The sequence spans 711 residues: Zinc finger CCCH domain-containing protein 43 (711 aa).

A disordered region spans residues 1–49 (MPQDDDWFWGRPTPVVVGDGETTSKPKPPVAGKTKKVEEQHPRRPGEPD). Basic and acidic residues predominate over residues 35–47 (KKVEEQHPRRPGE). 3 C3H1-type zinc fingers span residues 44 to 72 (RPGE…HPDP), 90 to 118 (RPGE…HPPR), and 157 to 185 (RPGT…HPDP). In terms of domain architecture, MIF4G spans 384-637 (LKTLKSILNT…GAISYLIEKE (254 aa)).

This is Zinc finger CCCH domain-containing protein 43 from Oryza sativa subsp. japonica (Rice).